Reading from the N-terminus, the 328-residue chain is Glycerol-3-phosphate dehydrogenase [NAD(P)+] (328 aa).

The NADPH site is built by Trp11, Arg30, and Lys103. Residues Lys103, Gly132, and Ser134 each coordinate sn-glycerol 3-phosphate. Residue Ala136 coordinates NADPH. 5 residues coordinate sn-glycerol 3-phosphate: Lys187, Asp240, Ser250, Arg251, and Asn252. Residue Lys187 is the Proton acceptor of the active site. Arg251 is an NADPH binding site. Val275 and Glu277 together coordinate NADPH.

This sequence belongs to the NAD-dependent glycerol-3-phosphate dehydrogenase family.

It is found in the cytoplasm. It catalyses the reaction sn-glycerol 3-phosphate + NAD(+) = dihydroxyacetone phosphate + NADH + H(+). The enzyme catalyses sn-glycerol 3-phosphate + NADP(+) = dihydroxyacetone phosphate + NADPH + H(+). It participates in membrane lipid metabolism; glycerophospholipid metabolism. Functionally, catalyzes the reduction of the glycolytic intermediate dihydroxyacetone phosphate (DHAP) to sn-glycerol 3-phosphate (G3P), the key precursor for phospholipid synthesis. This is Glycerol-3-phosphate dehydrogenase [NAD(P)+] from Aromatoleum aromaticum (strain DSM 19018 / LMG 30748 / EbN1) (Azoarcus sp. (strain EbN1)).